Consider the following 632-residue polypeptide: Extracellular metalloproteinase 2 (632 aa).

Residues 1–19 (MHGLLLAGLAVALPLGVAG) form the signal peptide. The propeptide occupies 20 to 244 (HPARPQTALS…VHNVVDYVAS (225 aa)). A glycan (N-linked (GlcNAc...) asparagine) is linked at Asn270. The span at 294 to 310 (NNVAAQDNPSGGSQWEN) shows a compositional bias: polar residues. Residues 294-313 (NNVAAQDNPSGGSQWENNYR) form a disordered region. His429 lines the Zn(2+) pocket. Glu430 is an active-site residue. Zn(2+) is bound at residue His433.

The protein belongs to the peptidase M36 family. It depends on Zn(2+) as a cofactor.

It localises to the secreted. Secreted metalloproteinase probably acting as a virulence factor. This is Extracellular metalloproteinase 2 (MEP2) from Arthroderma otae (Microsporum canis).